A 104-amino-acid polypeptide reads, in one-letter code: MSLNEPSIKQRTSSKVEKKEGYPPMYRVVLHNDDYTTMEFVVQILITVFGKSLEKASIIMLNIHKQGKGICGSYTREVAETKVNTVHHLAREQGFPLKSTMEKE.

The protein belongs to the ClpS family. In terms of assembly, binds to the N-terminal domain of the chaperone ClpA.

In terms of biological role, involved in the modulation of the specificity of the ClpAP-mediated ATP-dependent protein degradation. The polypeptide is ATP-dependent Clp protease adapter protein ClpS (Desulforapulum autotrophicum (strain ATCC 43914 / DSM 3382 / VKM B-1955 / HRM2) (Desulfobacterium autotrophicum)).